Reading from the N-terminus, the 409-residue chain is Tyrosine--tRNA ligase (409 aa).

Tyr35 contacts L-tyrosine. The short motif at 40–49 (CTAESLHVGS) is the 'HIGH' region element. L-tyrosine contacts are provided by Tyr172 and Gln176. Residues 232 to 236 (KMGKT) carry the 'KMSKS' region motif. Residue Lys235 coordinates ATP. Positions 343–409 (ISILDLVILS…KKKHIKVELI (67 aa)) constitute an S4 RNA-binding domain.

This sequence belongs to the class-I aminoacyl-tRNA synthetase family. TyrS type 1 subfamily. As to quaternary structure, homodimer.

It localises to the cytoplasm. The enzyme catalyses tRNA(Tyr) + L-tyrosine + ATP = L-tyrosyl-tRNA(Tyr) + AMP + diphosphate + H(+). In terms of biological role, catalyzes the attachment of tyrosine to tRNA(Tyr) in a two-step reaction: tyrosine is first activated by ATP to form Tyr-AMP and then transferred to the acceptor end of tRNA(Tyr). This Pelagibacter ubique (strain HTCC1062) protein is Tyrosine--tRNA ligase.